We begin with the raw amino-acid sequence, 142 residues long: Large ribosomal subunit protein uL13 (142 aa).

Belongs to the universal ribosomal protein uL13 family. Part of the 50S ribosomal subunit.

Functionally, this protein is one of the early assembly proteins of the 50S ribosomal subunit, although it is not seen to bind rRNA by itself. It is important during the early stages of 50S assembly. This is Large ribosomal subunit protein uL13 from Agathobacter rectalis (strain ATCC 33656 / DSM 3377 / JCM 17463 / KCTC 5835 / VPI 0990) (Eubacterium rectale).